A 462-amino-acid chain; its full sequence is Argininosuccinate lyase (462 aa).

Belongs to the lyase 1 family. Argininosuccinate lyase subfamily.

Its subcellular location is the cytoplasm. The enzyme catalyses 2-(N(omega)-L-arginino)succinate = fumarate + L-arginine. It functions in the pathway amino-acid biosynthesis; L-arginine biosynthesis; L-arginine from L-ornithine and carbamoyl phosphate: step 3/3. This chain is Argininosuccinate lyase, found in Gloeothece citriformis (strain PCC 7424) (Cyanothece sp. (strain PCC 7424)).